Consider the following 351-residue polypeptide: Probable sugar phosphate/phosphate translocator At5g11230 (351 aa).

Transmembrane regions (helical) follow at residues 15–35 (IVLS…VIVY), 49–69 (FPIS…FLII), 89–109 (VVPI…AYIY), 113–133 (SFIQ…GVLF), 141–161 (DTMM…YGEA), 165–185 (VWGV…LVLI), 205–225 (VAPC…FPVL), 236–256 (AIFG…FLLV), 263–283 (TMNV…WSVI), and 286–306 (TVTP…AYYN). Residues 38–156 (YILDKKMYNW…LSISFGVAIA (119 aa)) form the EamA domain. A disordered region spans residues 321–351 (KKIQQADEESGRLLEEREGDVEGKKNDQSGN).

It belongs to the TPT transporter family. TPT (TC 2.A.7.9) subfamily.

The protein localises to the membrane. In Arabidopsis thaliana (Mouse-ear cress), this protein is Probable sugar phosphate/phosphate translocator At5g11230.